We begin with the raw amino-acid sequence, 241 residues long: Purine nucleoside phosphorylase DeoD-type (241 aa).

Position 5 (His-5) interacts with a purine D-ribonucleoside. Phosphate contacts are provided by residues Gly-21, Arg-25, Arg-44, and 88–91 (RVGS). Residues 180 to 182 (EME) and 204 to 205 (SD) contribute to the a purine D-ribonucleoside site. Asp-205 (proton donor) is an active-site residue.

It belongs to the PNP/UDP phosphorylase family. In terms of assembly, homohexamer; trimer of homodimers.

The catalysed reaction is a purine D-ribonucleoside + phosphate = a purine nucleobase + alpha-D-ribose 1-phosphate. The enzyme catalyses a purine 2'-deoxy-D-ribonucleoside + phosphate = a purine nucleobase + 2-deoxy-alpha-D-ribose 1-phosphate. Catalyzes the reversible phosphorolytic breakdown of the N-glycosidic bond in the beta-(deoxy)ribonucleoside molecules, with the formation of the corresponding free purine bases and pentose-1-phosphate. The sequence is that of Purine nucleoside phosphorylase DeoD-type from Yersinia enterocolitica serotype O:8 / biotype 1B (strain NCTC 13174 / 8081).